A 370-amino-acid polypeptide reads, in one-letter code: Mitogen-activated protein kinase 3 (370 aa).

The Protein kinase domain maps to 38–324; it reads RPPIIPIGRG…VEQALNHQYL (287 aa). ATP contacts are provided by residues 44 to 52 and lysine 67; that span reads IGRGAYGIV. Catalysis depends on aspartate 164, which acts as the Proton acceptor. Threonine 196 carries the phosphothreonine modification. The TXY signature appears at 196-198; sequence TEY. A Phosphotyrosine modification is found at tyrosine 198. Position 201 is a phosphothreonine (threonine 201).

Belongs to the protein kinase superfamily. CMGC Ser/Thr protein kinase family. MAP kinase subfamily. Interacts with DSPTP1B/MKP2, NDPK2 and VIP1. The interaction with DSPTP1B/MKP2 is repressed by fungal elicitation. Binds to LIP5. Interacts with VQ4. Interacts with RACK1A, RACK1B and RACK1C. Interacts with FLZ9. Interacts with MKK5. Post-translationally, dually phosphorylated on Thr-196 and Tyr-198, which activates the enzyme. Dephosphorylated by DSPTP1B/MKP2.

It localises to the cytoplasm. It is found in the nucleus. The protein resides in the cell cortex. The catalysed reaction is L-seryl-[protein] + ATP = O-phospho-L-seryl-[protein] + ADP + H(+). The enzyme catalyses L-threonyl-[protein] + ATP = O-phospho-L-threonyl-[protein] + ADP + H(+). Activated by threonine and tyrosine phosphorylation. Activated by MAP kinase kinases MKK4, MKK5, MKK7 and MKK9. Activated in response to hydrogen peroxide, ozone, salt stress and flagellin bacterial elicitor. Triggered by Agrobacterium upon T-DNA transfer. Repressed by DSPTP1B/MKP2-mediated dephosphorylation. In terms of biological role, involved in oxidative stress-mediated signaling cascade (such as ozone). Involved in the innate immune MAP kinase signaling cascade (MEKK1, MKK4/MKK5 and MPK3/MPK6) downstream of bacterial flagellin receptor FLS2. May be involved in hypersensitive response (HR)-mediated signaling cascade by modulating LIP5 phosphorylation and subsequent multivesicular bodies (MVBs) trafficking. May phosphorylate regulators of WRKY transcription factors. Mediates the phosphorylation of VIP1 and subsequent stress genes transcription in response to Agrobacterium. MKK9-MPK3/MPK6 module phosphorylates and activates EIN3, leading to the promotion of EIN3-mediated transcription in ethylene signaling. MPK3/MPK6 cascade regulates camalexin synthesis through transcriptional regulation of the biosynthetic genes after pathogen infection. YDA-MKK4/MKK5-MPK3/MPK6 module regulates stomatal cell fate before the guard mother cell (GMC) is specified. When activated, reinforces the feedback loop by phosphorylating BASL, and inhibits stomatal fate by phosphorylating SPCH. This MAPK cascade also functions downstream of the ER receptor in regulating coordinated local cell proliferation, which shapes the morphology of plant organs. The chain is Mitogen-activated protein kinase 3 from Arabidopsis thaliana (Mouse-ear cress).